The chain runs to 257 residues: Large ribosomal subunit protein uL2 (257 aa).

Residues Lys-42 and Lys-149 each participate in a glycyl lysine isopeptide (Lys-Gly) (interchain with G-Cter in SUMO2) cross-link. Positions 207 to 232 are disordered; sequence VEHPFGGGNHQHIGKPSTIRRDAPAG. (3S)-3-hydroxyhistidine is present on His-216. Glycyl lysine isopeptide (Lys-Gly) (interchain with G-Cter in SUMO2) cross-links involve residues Lys-234 and Lys-250.

The protein belongs to the universal ribosomal protein uL2 family. As to quaternary structure, component of the large ribosomal subunit. Interacts with CRY1. In terms of processing, hydroxylated on His-216 by RIOX1. The modification is impaired by hypoxia.

The protein localises to the cytoplasm. Functionally, component of the large ribosomal subunit. The ribosome is a large ribonucleoprotein complex responsible for the synthesis of proteins in the cell. In Bos taurus (Bovine), this protein is Large ribosomal subunit protein uL2 (RPL8).